A 678-amino-acid polypeptide reads, in one-letter code: UvrABC system protein C (678 aa).

The region spanning 16-95 (VEPGVYRFRD…IKEFDPRFNI (80 aa)) is the GIY-YIG domain. Positions 208-243 (DRLIREMEQQMNAAAEELDFERAARLRDNIGAMRRA) constitute a UVR domain. The disordered stretch occupies residues 477 to 508 (HLRDAEAAPEGRPEQGPRASARPEQGPRASAR). Residues 479-491 (RDAEAAPEGRPEQ) show a composition bias toward basic and acidic residues.

The protein belongs to the UvrC family. In terms of assembly, interacts with UvrB in an incision complex.

It localises to the cytoplasm. Functionally, the UvrABC repair system catalyzes the recognition and processing of DNA lesions. UvrC both incises the 5' and 3' sides of the lesion. The N-terminal half is responsible for the 3' incision and the C-terminal half is responsible for the 5' incision. In Mycolicibacterium vanbaalenii (strain DSM 7251 / JCM 13017 / BCRC 16820 / KCTC 9966 / NRRL B-24157 / PYR-1) (Mycobacterium vanbaalenii), this protein is UvrABC system protein C.